We begin with the raw amino-acid sequence, 442 residues long: tRNA-2-methylthio-N(6)-dimethylallyladenosine synthase (442 aa).

An MTTase N-terminal domain is found at Asn-3–Asn-120. [4Fe-4S] cluster contacts are provided by Cys-12, Cys-49, Cys-83, Cys-157, Cys-161, and Cys-164. One can recognise a Radical SAM core domain in the interval Arg-143–His-375. A TRAM domain is found at Gln-378–Thr-440.

The protein belongs to the methylthiotransferase family. MiaB subfamily. As to quaternary structure, monomer. The cofactor is [4Fe-4S] cluster.

The protein localises to the cytoplasm. It carries out the reaction N(6)-dimethylallyladenosine(37) in tRNA + (sulfur carrier)-SH + AH2 + 2 S-adenosyl-L-methionine = 2-methylsulfanyl-N(6)-dimethylallyladenosine(37) in tRNA + (sulfur carrier)-H + 5'-deoxyadenosine + L-methionine + A + S-adenosyl-L-homocysteine + 2 H(+). In terms of biological role, catalyzes the methylthiolation of N6-(dimethylallyl)adenosine (i(6)A), leading to the formation of 2-methylthio-N6-(dimethylallyl)adenosine (ms(2)i(6)A) at position 37 in tRNAs that read codons beginning with uridine. The polypeptide is tRNA-2-methylthio-N(6)-dimethylallyladenosine synthase (Vesicomyosocius okutanii subsp. Calyptogena okutanii (strain HA)).